The primary structure comprises 457 residues: Casein kinase 1-like protein 11 (457 aa).

A Protein kinase domain is found at 15–284; that stretch reads FKLGRKLGSG…LRRLFRDLFI (270 aa). Residues 21–29 and Lys44 contribute to the ATP site; that span reads LGSGSFGEL. Asp134 functions as the Proton acceptor in the catalytic mechanism. Disordered regions lie at residues 305-337 and 352-442; these read GSSS…GQDL and NVSS…EDAI. A compositionally biased stretch (pro residues) spans 311–324; it reads RPTPRPALDPPGPP. 2 stretches are compositionally biased toward polar residues: residues 383-403 and 409-429; these read NGST…SAEP and SRLF…QSYE.

It belongs to the protein kinase superfamily. CK1 Ser/Thr protein kinase family. Casein kinase I subfamily. In terms of assembly, monomer. Post-translationally, autophosphorylated.

It is found in the cytoplasm. Its subcellular location is the nucleus. The enzyme catalyses L-seryl-[protein] + ATP = O-phospho-L-seryl-[protein] + ADP + H(+). The catalysed reaction is L-threonyl-[protein] + ATP = O-phospho-L-threonyl-[protein] + ADP + H(+). With respect to regulation, partially inhibited by N-(2-aminoethyl)-5-chloroisoquinoline-8-sulfonamide (CKI-7). Casein kinases are operationally defined by their preferential utilization of acidic proteins such as caseins as substrates. Can phosphorylate casein, phosvitin, myosin light chains and poly(Glu,Tyr) in vitro. This chain is Casein kinase 1-like protein 11, found in Arabidopsis thaliana (Mouse-ear cress).